A 1523-amino-acid chain; its full sequence is Rho GTPase-activating protein gacHH (1523 aa).

Kelch repeat units lie at residues Asp30–Ser76, Lys83–Asp133, and Tyr135–Pro184. Composition is skewed to polar residues over residues Asn161–Gly173 and Pro184–Gln194. The tract at residues Asn161 to Thr256 is disordered. Residues Ser195–Ser211 show a composition bias toward low complexity. The segment covering Ala212–Pro221 has biased composition (polar residues). Over residues Asn227 to Asn244 the composition is skewed to low complexity. Kelch repeat units follow at residues Lys335–Ser384, Leu386–Ser441, and Ile443–Ser496. Disordered stretches follow at residues Leu510–Asn569, Gln609–Asp631, and Asn647–Ser671. Positions Gly615–Gly626 are enriched in gly residues. Residues Cys690–Ser729 are a coiled coil. The disordered stretch occupies residues Asn748–Leu786. Residues Tyr812–Phe840 are a coiled coil. 5 disordered regions span residues Ser861 to Gln881, Leu905 to Leu927, Thr963 to Thr991, Ser1006 to Lys1096, and Asn1143 to Ile1194. Residues Gln870 to Gln881 show a composition bias toward low complexity. Residues Leu905–Val915 show a composition bias toward basic and acidic residues. 4 stretches are compositionally biased toward low complexity: residues Pro971–Gln981, Ser1012–Asn1030, Gln1043–Gln1079, and Asn1143–Leu1153. Residues Leu1151–Phe1228 adopt a coiled-coil conformation. Basic and acidic residues predominate over residues Ser1155–Ile1194. One can recognise a Rho-GAP domain in the interval Ser1233–Phe1411. The interval Asp1425–Ile1482 is disordered. Residues Ser1430–Thr1476 show a composition bias toward low complexity.

The protein resides in the cytoplasm. Functionally, rho GTPase-activating protein involved in the signal transduction pathway. The polypeptide is Rho GTPase-activating protein gacHH (gacHH) (Dictyostelium discoideum (Social amoeba)).